A 62-amino-acid chain; its full sequence is MARITVQDAVEKIGNRFDLVLVASQRAREMQIFGKSPMVDKENDKYTVIALREIEQGLIEKQ.

Belongs to the RNA polymerase subunit omega family. In terms of assembly, the RNAP catalytic core consists of 2 alpha, 1 beta, 1 beta' and 1 omega subunit. When a sigma factor is associated with the core the holoenzyme is formed, which can initiate transcription.

It catalyses the reaction RNA(n) + a ribonucleoside 5'-triphosphate = RNA(n+1) + diphosphate. Functionally, promotes RNA polymerase assembly. Latches the N- and C-terminal regions of the beta' subunit thereby facilitating its interaction with the beta and alpha subunits. The polypeptide is DNA-directed RNA polymerase subunit omega (Wigglesworthia glossinidia brevipalpis).